A 153-amino-acid polypeptide reads, in one-letter code: 3-dehydroquinate dehydratase (153 aa).

Tyr26 functions as the Proton acceptor in the catalytic mechanism. The substrate site is built by Asn77, His83, and Asp90. His103 acts as the Proton donor in catalysis. Substrate is bound by residues 104-105 (LS) and Arg114.

It belongs to the type-II 3-dehydroquinase family. As to quaternary structure, homododecamer.

It carries out the reaction 3-dehydroquinate = 3-dehydroshikimate + H2O. It functions in the pathway metabolic intermediate biosynthesis; chorismate biosynthesis; chorismate from D-erythrose 4-phosphate and phosphoenolpyruvate: step 3/7. Catalyzes a trans-dehydration via an enolate intermediate. The protein is 3-dehydroquinate dehydratase of Colwellia psychrerythraea (strain 34H / ATCC BAA-681) (Vibrio psychroerythus).